We begin with the raw amino-acid sequence, 907 residues long: Protein translocase subunit SecA (907 aa).

Residues Gln87, 105 to 109 (GEGKT), and Asp512 each bind ATP. The tract at residues 834 to 907 (QEDVERMEEQ…KKYKQCHGKI (74 aa)) is disordered. 2 stretches are compositionally biased toward basic and acidic residues: residues 836–853 (DVER…EAAR) and 873–888 (EEAH…KVGR). 4 residues coordinate Zn(2+): Cys892, Cys894, Cys903, and His904. Positions 898 to 907 (KKYKQCHGKI) are enriched in basic residues.

Belongs to the SecA family. Monomer and homodimer. Part of the essential Sec protein translocation apparatus which comprises SecA, SecYEG and auxiliary proteins SecDF-YajC and YidC. Requires Zn(2+) as cofactor.

Its subcellular location is the cell inner membrane. The protein resides in the cytoplasm. The catalysed reaction is ATP + H2O + cellular proteinSide 1 = ADP + phosphate + cellular proteinSide 2.. Its function is as follows. Part of the Sec protein translocase complex. Interacts with the SecYEG preprotein conducting channel. Has a central role in coupling the hydrolysis of ATP to the transfer of proteins into and across the cell membrane, serving both as a receptor for the preprotein-SecB complex and as an ATP-driven molecular motor driving the stepwise translocation of polypeptide chains across the membrane. The chain is Protein translocase subunit SecA from Aliivibrio fischeri (strain ATCC 700601 / ES114) (Vibrio fischeri).